Reading from the N-terminus, the 220-residue chain is Large ribosomal subunit protein bL9 (220 aa).

Residues 167–184 (AAAEVEQAEDVAAAEQQD) are compositionally biased toward low complexity. The interval 167 to 220 (AAAEVEQAEDVAAAEQQDSSPVDDHADDADGVADGEGRDEGAGDASDEEEMPST) is disordered. The span at 211–220 (ASDEEEMPST) shows a compositional bias: acidic residues.

Belongs to the bacterial ribosomal protein bL9 family.

Binds to the 23S rRNA. This Anaplasma marginale (strain Florida) protein is Large ribosomal subunit protein bL9.